A 228-amino-acid polypeptide reads, in one-letter code: Lactate utilization protein A (228 aa).

It belongs to the LutA/YkgE family.

In terms of biological role, is involved in L-lactate degradation and allows cells to grow with lactate as the sole carbon source. This is Lactate utilization protein A from Lysinibacillus sphaericus (strain C3-41).